We begin with the raw amino-acid sequence, 102 residues long: MNIAEYHQNIEQVWLQIEEQLEEQGCDVDCDTQGSVFTITFADRSQIVVNKQEPLLELWLASKAGGFHFAFKNNQWIAQDGKLFWQCLEQACLAHGEQVSFS.

Belongs to the frataxin family.

Involved in iron-sulfur (Fe-S) cluster assembly. May act as a regulator of Fe-S biogenesis. This is Iron-sulfur cluster assembly protein CyaY from Histophilus somni (strain 129Pt) (Haemophilus somnus).